Consider the following 552-residue polypeptide: NADH-ubiquinone oxidoreductase chain 5 (552 aa).

15 helical membrane-spanning segments follow: residues proline 11 to leucine 31, leucine 36 to isoleucine 56, phenylalanine 68 to tyrosine 88, leucine 89 to tryptophan 109, serine 121 to isoleucine 141, isoleucine 152 to leucine 172, threonine 196 to valine 216, leucine 229 to valine 249, valine 256 to isoleucine 274, histidine 287 to alanine 307, leucine 322 to leucine 342, isoleucine 365 to tyrosine 386, serine 406 to serine 426, alanine 453 to valine 473, and serine 532 to isoleucine 552.

This sequence belongs to the complex I subunit 5 family.

Its subcellular location is the mitochondrion inner membrane. The catalysed reaction is a ubiquinone + NADH + 5 H(+)(in) = a ubiquinol + NAD(+) + 4 H(+)(out). Its function is as follows. Core subunit of the mitochondrial membrane respiratory chain NADH dehydrogenase (Complex I) that is believed to belong to the minimal assembly required for catalysis. Complex I functions in the transfer of electrons from NADH to the respiratory chain. The immediate electron acceptor for the enzyme is believed to be ubiquinone. The chain is NADH-ubiquinone oxidoreductase chain 5 (NAD5) from Candida albicans (strain SC5314 / ATCC MYA-2876) (Yeast).